A 257-amino-acid chain; its full sequence is Fructose-2,6-bisphosphatase TIGAR B (257 aa).

The active-site Tele-phosphohistidine intermediate is His-11. Glu-89 serves as the catalytic Proton donor/acceptor.

Belongs to the phosphoglycerate mutase family.

It localises to the cytoplasm. Its subcellular location is the nucleus. The protein resides in the mitochondrion. It catalyses the reaction beta-D-fructose 2,6-bisphosphate + H2O = beta-D-fructose 6-phosphate + phosphate. Fructose-bisphosphatase hydrolyzing fructose-2,6-bisphosphate as well as fructose-1,6-bisphosphate. Acts as a negative regulator of glycolysis by lowering intracellular levels of fructose-2,6-bisphosphate in a p53/TP53-dependent manner, resulting in the pentose phosphate pathway (PPP) activation and NADPH production. Contributes to the generation of reduced glutathione to cause a decrease in intracellular reactive oxygen species (ROS) content, correlating with its ability to protect cells from oxidative or metabolic stress-induced cell death. May play a role in mitophagy inhibition. This is Fructose-2,6-bisphosphatase TIGAR B from Danio rerio (Zebrafish).